Consider the following 196-residue polypeptide: DNA replication complex GINS protein PSF1 (196 aa).

The protein belongs to the GINS1/PSF1 family. In terms of assembly, component of the GINS complex which is a heterotetramer of GINS1, GINS2, GINS3 and GINS4. Forms a stable subcomplex with GINS4. GINS complex interacts with DNA primase in vitro. Component of the CMG helicase complex, a hexameric ring of related MCM2-7 subunits stabilized by CDC45 and the tetrameric GINS complex.

Its subcellular location is the nucleus. The protein resides in the chromosome. In terms of biological role, required for correct functioning of the GINS complex, a complex that plays an essential role in the initiation of DNA replication, and progression of DNA replication forks. GINS complex is a core component of CDC45-MCM-GINS (CMG) helicase, the molecular machine that unwinds template DNA during replication, and around which the replisome is built. The chain is DNA replication complex GINS protein PSF1 (Gins1) from Mus musculus (Mouse).